We begin with the raw amino-acid sequence, 458 residues long: ATP synthase subunit beta (458 aa).

148–155 (GGAGVGKT) contributes to the ATP binding site.

This sequence belongs to the ATPase alpha/beta chains family. As to quaternary structure, F-type ATPases have 2 components, CF(1) - the catalytic core - and CF(0) - the membrane proton channel. CF(1) has five subunits: alpha(3), beta(3), gamma(1), delta(1), epsilon(1). CF(0) has three main subunits: a(1), b(2) and c(9-12). The alpha and beta chains form an alternating ring which encloses part of the gamma chain. CF(1) is attached to CF(0) by a central stalk formed by the gamma and epsilon chains, while a peripheral stalk is formed by the delta and b chains.

Its subcellular location is the cell inner membrane. The catalysed reaction is ATP + H2O + 4 H(+)(in) = ADP + phosphate + 5 H(+)(out). Produces ATP from ADP in the presence of a proton gradient across the membrane. The catalytic sites are hosted primarily by the beta subunits. The protein is ATP synthase subunit beta of Ectopseudomonas mendocina (strain ymp) (Pseudomonas mendocina).